The chain runs to 232 residues: Ubiquinone biosynthesis O-methyltransferase (232 aa).

S-adenosyl-L-methionine is bound by residues arginine 36, glycine 55, aspartate 76, and leucine 120.

The protein belongs to the methyltransferase superfamily. UbiG/COQ3 family.

The enzyme catalyses a 3-demethylubiquinol + S-adenosyl-L-methionine = a ubiquinol + S-adenosyl-L-homocysteine + H(+). It catalyses the reaction a 3-(all-trans-polyprenyl)benzene-1,2-diol + S-adenosyl-L-methionine = a 2-methoxy-6-(all-trans-polyprenyl)phenol + S-adenosyl-L-homocysteine + H(+). The protein operates within cofactor biosynthesis; ubiquinone biosynthesis. In terms of biological role, O-methyltransferase that catalyzes the 2 O-methylation steps in the ubiquinone biosynthetic pathway. The chain is Ubiquinone biosynthesis O-methyltransferase from Azotobacter vinelandii (strain DJ / ATCC BAA-1303).